Reading from the N-terminus, the 205-residue chain is Transmembrane emp24 domain-containing protein A (205 aa).

The signal sequence occupies residues 1 to 24; it reads MMNNKLLLLVIALLCIASNSIVES. At 25 to 172 the chain is on the lumenal side; that stretch reads FSFKVSAKVE…RNTAESTNSR (148 aa). In terms of domain architecture, GOLD spans 34 to 116; sequence EECIYEEIGV…DKTVSFILSV (83 aa). Residues 173–193 form a helical membrane-spanning segment; it reads VLWWSVFEAFVLIALSIWQIY. Topologically, residues 194–205 are cytoplasmic; that stretch reads YLRRFFEVKRAV.

This sequence belongs to the EMP24/GP25L family.

Its subcellular location is the cytoplasmic vesicle membrane. Could have a role in the budding of coatomer-coated and other species of coated vesicles. This chain is Transmembrane emp24 domain-containing protein A (empA), found in Dictyostelium discoideum (Social amoeba).